We begin with the raw amino-acid sequence, 256 residues long: Short-chain dehydrogenase/reductase cdmF (256 aa).

3 residues coordinate NADP(+): V11, D57, and R119. Residue S137 is the Proton donor of the active site. Residues Y151, K155, G183, and N187 each contribute to the NADP(+) site. Y151 functions as the Proton acceptor in the catalytic mechanism. K155 serves as the catalytic Lowers pKa of active site Tyr.

It belongs to the short-chain dehydrogenases/reductases (SDR) family.

It catalyses the reaction 3-hydroxypentacecilide A + A = chrodrimanin C + AH2. The catalysed reaction is chrodrimanin F + A = chrodrimanin H + AH2. It functions in the pathway secondary metabolite biosynthesis; terpenoid biosynthesis. Its function is as follows. Short-chain dehydrogenase/reductase; part of the gene cluster that mediates the biosynthesis of chrodrimanin B, a meroterpenoid that acts as a potent blocker of insect GABA-gated chloride channels. The first step of the pathway is the biosynthesis of 6-hydroxymellein by the polyketide synthase cdmE. The prenyltransferase cdmH acts as a 6-hydroxymellein 5-farnesyltransferase and produces the hydrophobic metabolite verruculide C. The FAD-dependent monooxygenase cdmI further converts verruculide C into verruculide B. The terpene cyclase cdmG then produced the pentacyclic molecule 3-hydroxypentacecilide A, the backbone structure of chrodrimanin B, via folding the farnesyl moiety of the substrate into the chair-boat conformation. The short-chain dehydrogenase/reductase cdmF functions as the 3-OH dehydrogenase that oxidizes the C-3 hydroxyl group of 3-hydroxypentacecilide A and produces chrodrimanin C, the dehydrogenated product of 3-hydroxypentacecilide A. The cytochrome P450 monooxygenase cdmJ then accepts both 3-hydroxypentacecilide A and chrodrimanin C and functions as a C-7-beta-hydroxylase to produce respectively chrodrimanin H and chrodrimanin F. The dioxygenase cdmA accepts chrodrimanin H to afford chrodrimanin E, which is further transformed to chrodrimanin A by the dioxygenase cdmD. CdmA can also accept chrodrimanin C as substrate to convert it into verruculide A, which is further converted into chrodrimanin T by cdmD. The last step of the biosynthesis is proposed to be performed by the acetyltransferase cdmC which acetylates chrodrimanin A to yield chrodrimanin B. The pathway may also lead to the production of additional shunt products, including chrodrimanins T and U. This Talaromyces verruculosus (Penicillium verruculosum) protein is Short-chain dehydrogenase/reductase cdmF.